Consider the following 177-residue polypeptide: Large ribosomal subunit protein uL6 (177 aa).

The segment covering 154 to 171 has biased composition (basic and acidic residues); it reads PEPYKGKGVRYADEQVRR. The disordered stretch occupies residues 154 to 177; sequence PEPYKGKGVRYADEQVRRKEAKKK.

The protein belongs to the universal ribosomal protein uL6 family. As to quaternary structure, part of the 50S ribosomal subunit.

This protein binds to the 23S rRNA, and is important in its secondary structure. It is located near the subunit interface in the base of the L7/L12 stalk, and near the tRNA binding site of the peptidyltransferase center. The chain is Large ribosomal subunit protein uL6 from Marinobacter nauticus (strain ATCC 700491 / DSM 11845 / VT8) (Marinobacter aquaeolei).